The sequence spans 348 residues: MRREILSRTLLLSSLFVAGGFLTACGGGGGGTGGGEQGKITNELQAKAALGNSLSAIRSSAGLTEDTQTGVGAASVGNKGGWLRDALKLYKSAAPQTGTLASQQQYTCDNGGTATIDYSYDSNTRTASATITFDNCGNTCSLNKYVIFNGTMRFSGKDINQNYILESGSISVDSGFSYTDQCENEGVYFEGNFSISVKGYIPNTGDIEDGNNNYKADLTLDGGPVKVTDGSKWERGSFDNLTFYINEYYPASADYEWKVNGGFRYQDSYCVTDPVYLSFNTTNIFKGYNTVECEYTGRLSVNNDLIVAESYDPDSKPSETENYLKILFNGNVVFDNLCTNFNPPDTCS.

This is an uncharacterized protein from Aquifex aeolicus (strain VF5).